We begin with the raw amino-acid sequence, 218 residues long: Outer-membrane lipoprotein LolB (218 aa).

The N-terminal stretch at 1-20 (MSQVIRTLALTGLALAGLSG) is a signal peptide. Cys-21 carries N-palmitoyl cysteine lipidation. The S-diacylglycerol cysteine moiety is linked to residue Cys-21.

This sequence belongs to the LolB family. As to quaternary structure, monomer.

Its subcellular location is the cell outer membrane. Functionally, plays a critical role in the incorporation of lipoproteins in the outer membrane after they are released by the LolA protein. The sequence is that of Outer-membrane lipoprotein LolB from Xanthomonas campestris pv. campestris (strain 8004).